The chain runs to 369 residues: Olfactory receptor 2T1 (369 aa).

Over 1-76 the chain is Extracellular; that stretch reads MWQEYYFLNV…LFNRKETSGL (76 aa). A glycan (N-linked (GlcNAc...) asparagine) is linked at asparagine 56. The chain crosses the membrane as a helical span at residues 77 to 97; that stretch reads IFAIISIIFFTALMANGVMIF. The Cytoplasmic portion of the chain corresponds to 98-107; the sequence is LIQTDLRLHT. The helical transmembrane segment at 108–128 threads the bilayer; that stretch reads PMYFLLSHLSLIDMMYISTIV. The Extracellular portion of the chain corresponds to 129–148; sequence PKMLVNYLLDQRTISFVGCT. Cysteines 147 and 239 form a disulfide. The helical transmembrane segment at 149–169 threads the bilayer; the sequence is AQHFLYLTLVGAEFFLLGLMA. At 170 to 191 the chain is on the cytoplasmic side; that stretch reads YDRYVAICNPLRYPVLMSRRVC. Residues 192 to 212 traverse the membrane as a helical segment; it reads WMIIAGSWFGGSLDGFLLTPI. Residues 213 to 247 lie on the Extracellular side of the membrane; it reads TMSFPFCNSREINHFFCEAPAVLKLACADTALYET. The chain crosses the membrane as a helical span at residues 248 to 268; sequence VMYVCCVLMLLIPFSVVLASY. Over 269–286 the chain is Cytoplasmic; that stretch reads ARILTTVQCMSSVEGRKK. Residues 287–307 traverse the membrane as a helical segment; it reads AFATCSSHMTVVSLFYGAAMY. Residues 308–321 lie on the Extracellular side of the membrane; the sequence is TYMLPHSYHKPAQD. Residues 322–342 form a helical membrane-spanning segment; it reads KVLSVFYTILTPMLNPLIYSL. The Cytoplasmic portion of the chain corresponds to 343 to 369; the sequence is RNKDVTGALKRALGRFKGPQRVSGGVF.

Belongs to the G-protein coupled receptor 1 family.

The protein resides in the cell membrane. Its function is as follows. Odorant receptor. The protein is Olfactory receptor 2T1 (OR2T1) of Homo sapiens (Human).